We begin with the raw amino-acid sequence, 308 residues long: MTENAAPTRAGFVALIGEPNAGKSTLTNAMVGAKVSIVTHKVQTTRARIRGVALEGAAQIVFVDTPGLFRPRRRLDRAMVAAAWGGAADADIVVLMVEAHRGMTDGVRAILETLNERRDPKQIVALAINKIDRVKSEVLLKLTQDLNAAYPFAETFMISAEKGYGVADLRAWLGASLPEGPWMYPEDQIADVPLRMIAAEITREKLTLRLHQELPYQLTVETENWEERKDGSVRIDQVVYVMRDGHKGILLGHKGETAKAVSKAAREELVEFLGRKVHLFLQVKVRPNWLEEKERFDEMGLDFRDGNA.

Positions 9–179 (RAGFVALIGE…RAWLGASLPE (171 aa)) constitute an Era-type G domain. The tract at residues 17-24 (GEPNAGKS) is G1. Position 17–24 (17–24 (GEPNAGKS)) interacts with GTP. Residues 43-47 (QTTRA) are G2. The G3 stretch occupies residues 64-67 (DTPG). GTP-binding positions include 64–68 (DTPGL) and 129–132 (NKID). The interval 129 to 132 (NKID) is G4. Residues 158-160 (ISA) form a G5 region. Residues 210–287 (LHQELPYQLT…HLFLQVKVRP (78 aa)) form the KH type-2 domain.

It belongs to the TRAFAC class TrmE-Era-EngA-EngB-Septin-like GTPase superfamily. Era GTPase family. In terms of assembly, monomer.

It is found in the cytoplasm. The protein resides in the cell inner membrane. Functionally, an essential GTPase that binds both GDP and GTP, with rapid nucleotide exchange. Plays a role in 16S rRNA processing and 30S ribosomal subunit biogenesis and possibly also in cell cycle regulation and energy metabolism. This is GTPase Era from Dinoroseobacter shibae (strain DSM 16493 / NCIMB 14021 / DFL 12).